The following is a 392-amino-acid chain: Imidazolonepropionase (392 aa).

Positions 69 and 71 each coordinate Fe(3+). Zn(2+) contacts are provided by H69 and H71. 3 residues coordinate 4-imidazolone-5-propanoate: R78, Y136, and H163. Y136 provides a ligand contact to N-formimidoyl-L-glutamate. H226 provides a ligand contact to Fe(3+). H226 serves as a coordination point for Zn(2+). Q229 is a 4-imidazolone-5-propanoate binding site. D302 serves as a coordination point for Fe(3+). D302 serves as a coordination point for Zn(2+). 2 residues coordinate N-formimidoyl-L-glutamate: N304 and G306. S307 serves as a coordination point for 4-imidazolone-5-propanoate.

This sequence belongs to the metallo-dependent hydrolases superfamily. HutI family. The cofactor is Zn(2+). Fe(3+) is required as a cofactor.

It is found in the cytoplasm. It carries out the reaction 4-imidazolone-5-propanoate + H2O = N-formimidoyl-L-glutamate. Its pathway is amino-acid degradation; L-histidine degradation into L-glutamate; N-formimidoyl-L-glutamate from L-histidine: step 3/3. Its function is as follows. Catalyzes the hydrolytic cleavage of the carbon-nitrogen bond in imidazolone-5-propanoate to yield N-formimidoyl-L-glutamate. It is the third step in the universal histidine degradation pathway. The sequence is that of Imidazolonepropionase from Salinispora tropica (strain ATCC BAA-916 / DSM 44818 / JCM 13857 / NBRC 105044 / CNB-440).